The primary structure comprises 282 residues: MSKALKVGLDGGPYALAAGPDGAMWVTLAHSGEIARVTETGEVAVYPVAPQARPSIIAAGPDGAMWFTRAGDDRIGRITVDGELAEFELAEGSAPFGIAAGPDDALWFTAMTSGEVCRISTDGEVTSVAVVGGMPSMITAGPDGAMWFTINQGNAIGRLETDGTLTVRELPTPAAGPVGITATHDDAVWFTEIGADQLGRIPLDEAIQELELPGKPHAVVADPDDGVWVSLWGADQLARVSGDGEVVTIDLPSGSEPHGLAIGPDGAAWVALECGFVLRMPN.

Histidine 217 provides a ligand contact to substrate. Residue glutamate 256 coordinates Mg(2+). The Proton acceptor role is filled by histidine 258. Glutamate 273 provides a ligand contact to Mg(2+).

This sequence belongs to the Vgb family. In terms of assembly, monomer. Mg(2+) is required as a cofactor.

Functionally, inactivates the type B streptogramin antibiotics by linearizing the lactone ring at the ester linkage, generating a free phenylglycine carboxylate and converting the threonyl moiety into 2-amino-butenoic acid. This chain is Virginiamycin B lyase, found in Mycolicibacterium smegmatis (strain ATCC 700084 / mc(2)155) (Mycobacterium smegmatis).